A 338-amino-acid chain; its full sequence is Histidinol-phosphate aminotransferase (338 aa).

Lysine 204 is subject to N6-(pyridoxal phosphate)lysine.

This sequence belongs to the class-II pyridoxal-phosphate-dependent aminotransferase family. Histidinol-phosphate aminotransferase subfamily. The cofactor is pyridoxal 5'-phosphate.

It carries out the reaction L-histidinol phosphate + 2-oxoglutarate = 3-(imidazol-4-yl)-2-oxopropyl phosphate + L-glutamate. It participates in amino-acid biosynthesis; L-histidine biosynthesis; L-histidine from 5-phospho-alpha-D-ribose 1-diphosphate: step 7/9. The protein is Histidinol-phosphate aminotransferase of Pyrococcus furiosus (strain ATCC 43587 / DSM 3638 / JCM 8422 / Vc1).